The chain runs to 263 residues: Shikimate dehydrogenase (NADP(+)) (263 aa).

Residues 16 to 18 (SKS) and Thr-65 contribute to the shikimate site. Lys-69 functions as the Proton acceptor in the catalytic mechanism. Positions 90 and 105 each coordinate shikimate. NADP(+)-binding positions include 125-129 (GSGGS) and Leu-208. Tyr-210 is a shikimate binding site. Gly-230 lines the NADP(+) pocket.

It belongs to the shikimate dehydrogenase family. In terms of assembly, homodimer.

The enzyme catalyses shikimate + NADP(+) = 3-dehydroshikimate + NADPH + H(+). It functions in the pathway metabolic intermediate biosynthesis; chorismate biosynthesis; chorismate from D-erythrose 4-phosphate and phosphoenolpyruvate: step 4/7. Its activity is regulated as follows. Inhibited by curcumin, 3-(2-naphthyloxy)-4-oxo-2-(trifluoromethyl)-4H-chromen-7-yl 3-chlorobenzoate, butyl 2-{[3-(2-naphthyloxy)-4-oxo-2-(trifluoromethyl)-4H-chromen-7-yl]oxy}propanoate, 2-({2-[(2-{[2-(2,3-dimethylanilino)-2-oxoethyl]sulfanyl}-1,3-benzothiazol-6-yl)amino]-2-oxoethyl}sulfanyl)-N-(2-naphthyl)acetamide, and maesaquinone diacetate. Functionally, involved in the biosynthesis of the chorismate, which leads to the biosynthesis of aromatic amino acids. Catalyzes the reversible NADPH linked reduction of 3-dehydroshikimate (DHSA) to yield shikimate (SA). It can also use NAD to oxidize shikimate. The chain is Shikimate dehydrogenase (NADP(+)) from Helicobacter pylori (Campylobacter pylori).